Reading from the N-terminus, the 310-residue chain is Aspartate carbamoyltransferase catalytic subunit (310 aa).

R54 and T55 together coordinate carbamoyl phosphate. L-aspartate is bound at residue K84. Positions 105, 134, and 137 each coordinate carbamoyl phosphate. L-aspartate is bound by residues R167 and R229. The carbamoyl phosphate site is built by L267 and P268.

This sequence belongs to the aspartate/ornithine carbamoyltransferase superfamily. ATCase family. Heterododecamer (2C3:3R2) of six catalytic PyrB chains organized as two trimers (C3), and six regulatory PyrI chains organized as three dimers (R2).

The enzyme catalyses carbamoyl phosphate + L-aspartate = N-carbamoyl-L-aspartate + phosphate + H(+). It functions in the pathway pyrimidine metabolism; UMP biosynthesis via de novo pathway; (S)-dihydroorotate from bicarbonate: step 2/3. Functionally, catalyzes the condensation of carbamoyl phosphate and aspartate to form carbamoyl aspartate and inorganic phosphate, the committed step in the de novo pyrimidine nucleotide biosynthesis pathway. The protein is Aspartate carbamoyltransferase catalytic subunit of Enterobacter sp. (strain 638).